Consider the following 1381-residue polypeptide: EH domain-containing and endocytosis protein 1 (1381 aa).

EH domains are found at residues 14–113 (EQAF…NPAP) and 135–227 (DIAK…IRLE). EF-hand domains follow at residues 47-82 (LPGQ…IAQL) and 167-202 (LPNQ…IQLC). The Ca(2+) site is built by D180, D182, S184, and E191. The residue at position 238 (T238) is a Phosphothreonine. Phosphoserine occurs at positions 241 and 244. Phosphothreonine is present on T245. 2 positions are modified to phosphoserine: S248 and S249. T251 carries the post-translational modification Phosphothreonine. Phosphoserine is present on S265. The region spanning 276-311 (EKKQQFDAIFDSLDKQHAGSLSSAVLVPFFLSSRLN) is the EF-hand 3 domain. The region spanning 277-366 (KKQQFDAIFD…NELLQSPALG (90 aa)) is the EH 3 domain. Residues 389–535 (SKPSLQDMPH…SSPVKRTAST (147 aa)) form a disordered region. Polar residues-rich tracts occupy residues 404–424 (AVNT…NGSL) and 432–447 (PSFS…TVVQ). A Phosphoserine modification is found at S419. Residues 448-470 (NNTNNSFSYDNNNGQATLQQQQP) show a composition bias toward low complexity. 3 positions are modified to phosphothreonine: T450, T477, and T487. Residues 477-494 (THSSSGLKKFTPTSNFGQ) are compositionally biased toward polar residues. The residue at position 495 (S495) is a Phosphoserine. Positions 593-882 (GEASAQLSNA…RELSERQMNL (290 aa)) form a coiled coil. K674 is covalently cross-linked (Glycyl lysine isopeptide (Lys-Gly) (interchain with G-Cter in ubiquitin)). S848 is modified (phosphoserine). The interval 898–919 (SASNTDTTTKEATSRGNVHEDT) is disordered. The span at 905-919 (TTKEATSRGNVHEDT) shows a compositional bias: basic and acidic residues. Phosphoserine occurs at positions 931, 950, 964, 1008, 1012, and 1020. Disordered stretches follow at residues 933-1202 (LNVN…KDEF), 1214-1285 (VEED…QVSN), and 1298-1322 (SKAE…NDPI). The segment covering 937–957 (RVKDDEEKTERTESDVFDRDV) has biased composition (basic and acidic residues). 2 stretches are compositionally biased toward polar residues: residues 960-989 (LGSQ…LTET) and 1005-1019 (RSQS…NAPQ). Positions 1021–1036 (VRDDVELPETLEERDT) are enriched in basic and acidic residues. 2 stretches are compositionally biased toward polar residues: residues 1037–1049 (INNT…TGNL) and 1061–1073 (ATAS…NETT). T1046 is modified (phosphothreonine). Phosphoserine occurs at positions 1069, 1087, 1093, 1095, 1096, and 1100. A compositionally biased stretch (polar residues) spans 1093-1103 (SVSSIQESPKI). At T1111 the chain carries Phosphothreonine. The segment covering 1127 to 1139 (SDSSSSDDDEFED) has biased composition (acidic residues). Polar residues-rich tracts occupy residues 1147–1164 (TVKT…SSLE) and 1178–1195 (TSPS…TNSI). Residues S1181 and S1187 each carry the phosphoserine modification. The span at 1214–1226 (VEEDNGADSESEF) shows a compositional bias: acidic residues. Residues 1217-1381 (DNGADSESEF…AATNFLLDSA (165 aa)) are able to bind biological membranes. A compositionally biased stretch (polar residues) spans 1253–1285 (NAFTGTLTSSSNPTIPKPQVQQQSTSDPAQVSN). The residue at position 1307 (T1307) is a Phosphothreonine. K1329 is covalently cross-linked (Glycyl lysine isopeptide (Lys-Gly) (interchain with G-Cter in ubiquitin)). The 43-residue stretch at 1338–1380 (ATTPKSLAVEELSGMGFTEEEAHNALEKCNWDLEAATNFLLDS) folds into the UBA domain. S1343 carries the post-translational modification Phosphoserine.

It belongs to the VDP/USO1/EDE1 family. Interacts (via UBA domain) with monoubiquitin and ENT1 (via asparagine-proline-phenylalanine tripeptide motif called NPF). Interacts with PAL1 and SYP1.

The protein localises to the cytoplasm. Functionally, functions at the internalization step of the clathrin-mediated endocytosis (CME) as an early-acting scaffold protein. Requires clathrin adapter proteins, ENT1/2 and YAP1801/2, for normal spatiotemporal dynamics and viability. Binds to biological membranes in a ubiquitin-dependent manner. The chain is EH domain-containing and endocytosis protein 1 (EDE1) from Saccharomyces cerevisiae (strain ATCC 204508 / S288c) (Baker's yeast).